A 416-amino-acid chain; its full sequence is NADH-quinone oxidoreductase subunit H (416 aa).

Helical transmembrane passes span Leu-16 to Ile-36, Pro-84 to Ile-104, Leu-124 to Leu-144, Val-165 to Thr-185, Ser-197 to Gly-217, Val-260 to Leu-280, Trp-288 to Leu-308, Phe-320 to Ala-340, and Trp-353 to Trp-373.

The protein belongs to the complex I subunit 1 family. As to quaternary structure, NDH-1 is composed of 14 different subunits. Subunits NuoA, H, J, K, L, M, N constitute the membrane sector of the complex.

It localises to the cell membrane. The catalysed reaction is a quinone + NADH + 5 H(+)(in) = a quinol + NAD(+) + 4 H(+)(out). Its function is as follows. NDH-1 shuttles electrons from NADH, via FMN and iron-sulfur (Fe-S) centers, to quinones in the respiratory chain. The immediate electron acceptor for the enzyme in this species is believed to be menaquinone. Couples the redox reaction to proton translocation (for every two electrons transferred, four hydrogen ions are translocated across the cytoplasmic membrane), and thus conserves the redox energy in a proton gradient. This subunit may bind ubiquinone. This is NADH-quinone oxidoreductase subunit H from Mycobacterium sp. (strain KMS).